Here is a 405-residue protein sequence, read N- to C-terminus: Glucose-1-phosphate adenylyltransferase (405 aa).

Alpha-D-glucose 1-phosphate is bound by residues G164, 179 to 180 (EK), and S197.

The protein belongs to the bacterial/plant glucose-1-phosphate adenylyltransferase family. Homotetramer.

It catalyses the reaction alpha-D-glucose 1-phosphate + ATP + H(+) = ADP-alpha-D-glucose + diphosphate. It functions in the pathway glycan biosynthesis; glycogen biosynthesis. Functionally, involved in the biosynthesis of ADP-glucose, a building block required for the elongation reactions to produce glycogen. Catalyzes the reaction between ATP and alpha-D-glucose 1-phosphate (G1P) to produce pyrophosphate and ADP-Glc. In Corynebacterium jeikeium (strain K411), this protein is Glucose-1-phosphate adenylyltransferase.